The primary structure comprises 1030 residues: MSENSTDSKNFQFSEGSRESSNDELKVLLRDTETKEDEKSSFSNSEEESIIENLSDSSVNKEYAKNSLKLSDAVSESKYLNPLLKDKRHDRSFALHKVVVPDDYDYIPLNKHIPSDPPAKTYPFELDPFQSTAIKCVERMESVLVSAHTSAGKTVIAEYAIAQALKNRQRVIYTSPIKSLSNQKYRELLSEFGDVGLMTGDVSINPSASCLIMTTEILRAMLYKNSEIMHEIAWVIFDEVHYMRDKDRGVVWEETLILLPDAIRFIFLSATLPNALQFARWISEIHKQPCHVVYTDYRPTPLQHFIYPQGADGIYMLVDEKNKFKTENFKKVLEVLDHSTRQENYSKSSKKVKKSSSLERIINMVLSNRYDPIIVFCFSKKECEINAHQFGKLDLNDTENKELVTEIFDSAINQLSEEDRGLRQFEEMRSLLLRGIGIHHSGLLPILKELVEILFQEGLVRILFATETFSIGLNMPARTVLFTKAQKFSGNNFRWLTSGEYMQMSGRAGRRGIDTKGLSIVILDQSIDEQAARCLMNGQADVLNSAFHLSYGMILNLMRIEEISPEDILKKSFYQFQNMESLPLIKEELMQLKNEETSINIPNETAVKEFHDLKLQLEKYGEEIQKVMTHPDNCLPYLQSGRLIQIKLGGIIFPWGVLVNVIKREFDPNTREQVAPHETYVLDVLLPISSNSMSNHKVNPSILVPPRPNETPLYEIVSVLLTAVCNISSIRIYMPRELNSNESKLRAYRRVNEVIEEFKEIPYLDPLEHMHIESSTLSLSLRKLEILEPKLFDSPYYKDSKHRAEYHEFRKKLNLRAQIKDISTKITNTEAIIQLRELKIRQRVLRRLGFCTLENVIDIKGRVACEITSGDELLLVELIFQGFFNQMPPEEIAAALSCFVYEDKSEVSTLNLKEPFKKMYLTIIEAAKRIATVSLESKLQFNESDYLHQFKPDIMEPVSLWINGASFQEICIVSKLYEGSIVRTFRRLDELLKQLEHAAIVLGNNELKEKSVLTEQKLHRDIIFSASLYL.

Over residues 1 to 15 (MSENSTDSKNFQFSE) the composition is skewed to polar residues. Positions 1–53 (MSENSTDSKNFQFSEGSRESSNDELKVLLRDTETKEDEKSSFSNSEEESIIEN) are disordered. The span at 16–40 (GSRESSNDELKVLLRDTETKEDEKS) shows a compositional bias: basic and acidic residues. At Ser-41 the chain carries Phosphoserine. A Helicase ATP-binding domain is found at 134-290 (IKCVERMESV…WISEIHKQPC (157 aa)). Position 147–154 (147–154 (AHTSAGKT)) interacts with ATP. The DEVH box signature appears at 238–241 (DEVH). Residues 357–561 (SLERIINMVL…GMILNLMRIE (205 aa)) form the Helicase C-terminal domain.

This sequence belongs to the helicase family. SKI2 subfamily.

Its subcellular location is the nucleus. This is an uncharacterized protein from Schizosaccharomyces pombe (strain 972 / ATCC 24843) (Fission yeast).